Consider the following 305-residue polypeptide: Nuclear egress protein 1 (305 aa).

The interval 1–42 is disordered; it reads MYDIAPRRSGSRPGPGRDKTRRRSRFSAAGNPGVERRASRKS. Residues 105–224 form a CCCH-type zinc finger; that stretch reads CLTLSGMGYY…YVIFPGTSAH (120 aa).

It belongs to the herpesviridae NEC1 protein family. Forms a heterohexameric complex with NEC2. Interacts with capsid vertex specific component 2/CVC2; this interaction directs the capsid to the host inner nuclear membrane to initiate budding. Phosphorylated at serine residues in the N-terminus. This phosphorylation regulates the localization within the inner nuclear membrane.

It localises to the host nucleus inner membrane. In terms of biological role, plays an essential role in virion nuclear egress, the first step of virion release from infected cell. Within the host nucleus, NEC1 interacts with the newly formed capsid through the vertexes and directs it to the inner nuclear membrane by associating with NEC2. Induces the budding of the capsid at the inner nuclear membrane as well as its envelopment into the perinuclear space. There, the NEC1/NEC2 complex promotes the fusion of the enveloped capsid with the outer nuclear membrane and the subsequent release of the viral capsid into the cytoplasm where it will reach the secondary budding sites in the host Golgi or trans-Golgi network. The polypeptide is Nuclear egress protein 1 (Human herpesvirus 2 (strain HG52) (HHV-2)).